An 861-amino-acid chain; its full sequence is E3 ubiquitin-protein ligase HECTD3 (861 aa).

At Ala-2 the chain carries N-acetylalanine. Ser-12 bears the Phosphoserine mark. The region spanning 219–397 (DEDLIHFLYD…ASLVRYPRLE (179 aa)) is the DOC domain. In terms of domain architecture, HECT spans 512–857 (YEKPLDYRWP…NCVAIDTDMS (346 aa)). The active-site Glycyl thioester intermediate is the Cys-823.

Interacts with TRIOBP. Interacts with STX8.

It localises to the cytoplasm. The protein resides in the perinuclear region. It carries out the reaction S-ubiquitinyl-[E2 ubiquitin-conjugating enzyme]-L-cysteine + [acceptor protein]-L-lysine = [E2 ubiquitin-conjugating enzyme]-L-cysteine + N(6)-ubiquitinyl-[acceptor protein]-L-lysine.. The protein operates within protein modification; protein ubiquitination. E3 ubiquitin ligases accepts ubiquitin from an E2 ubiquitin-conjugating enzyme in the form of a thioester and then directly transfers the ubiquitin to targeted substrates. Mediates ubiquitination of TRIOBP and its subsequent proteasomal degradation, thus facilitating cell cycle progression by regulating the turn-over of TRIOBP. Also mediates ubiquitination of STX8. The sequence is that of E3 ubiquitin-protein ligase HECTD3 (Hectd3) from Mus musculus (Mouse).